The sequence spans 731 residues: Gelsolin (731 aa).

An actin-severing region spans residues 2–125 (VVEHPEFLKA…YKKGGVASGF (124 aa)). The Gelsolin-like 1 repeat unit spans residues 25–107 (FDLVPVPPNL…VQGFESATFL (83 aa)). Tyrosine 35 bears the Phosphotyrosine mark. The Ca(2+) site is built by glycine 41, aspartate 42, glutamate 73, aspartate 85, glycine 90, and alanine 92. The actin-actin interfilament contact point stretch occupies residues 72 to 75 (DESG). Residue 111 to 118 (KSGLKYKK) participates in a 1,2-diacyl-sn-glycero-3-phospho-(1D-myo-inositol-4,5-bisphosphate) binding. Residue valine 121 participates in Ca(2+) binding. Residue 137–145 (RLLQVKGRR) participates in a 1,2-diacyl-sn-glycero-3-phospho-(1D-myo-inositol-4,5-bisphosphate) binding. The stretch at 147–219 (VRATEVPVSW…FEEGAEPEAM (73 aa)) is one Gelsolin-like 2 repeat. Positions 162 and 163 each coordinate Ca(2+). Cysteine 164 and cysteine 177 are joined by a disulfide. Glutamate 185, aspartate 235, glutamate 278, aspartate 279, and glutamate 303 together coordinate Ca(2+). The Gelsolin-like 3 repeat unit spans residues 266–338 (DENPFAQGAL…LPEGGETPLF (73 aa)). Residues tyrosine 358 and tyrosine 414 each carry the phosphotyrosine modification. The tract at residues 383–731 (AAQHGMDDDG…LDRALAELAA (349 aa)) is actin-binding, Ca-sensitive. Residues 404–485 (SNKVPVDPAT…VQGKEPAHLM (82 aa)) form a Gelsolin-like 4 repeat. Glycine 420, aspartate 421, glutamate 451, aspartate 463, glycine 468, proline 470, and threonine 500 together coordinate Ca(2+). N6-acetyllysine is present on lysine 533. A Gelsolin-like 5 repeat occupies 533–591 (KAGALNSNDAFVLKTPSAAYLWVGAGASEAEKTGAQELLRVLRAQPVQVAEGSEPDSFW). Ca(2+)-binding residues include asparagine 540 and aspartate 541. Residue tyrosine 552 is modified to Phosphotyrosine. Glutamate 563 is a binding site for Ca(2+). Residue tyrosine 600 is modified to Phosphotyrosine. Residues 630–705 (IEEVPGEFMQ…VKQGFEPPSF (76 aa)) form a Gelsolin-like 6 repeat. Ca(2+) contacts are provided by aspartate 645, aspartate 646, and glutamate 668. A Phosphothreonine modification is found at threonine 691.

It belongs to the villin/gelsolin family. In terms of assembly, binds to actin and to fibronectin. Identified in a complex composed of ACTA1, COBL, GSN and TMSB4X. Interacts with the inactive form of EIF2AK2/PKR. Interacts with FLII.

The protein resides in the cytoplasm. It localises to the cytoskeleton. Calcium-regulated, actin-modulating protein that binds to the plus (or barbed) ends of actin monomers or filaments, preventing monomer exchange (end-blocking or capping). It can promote the assembly of monomers into filaments (nucleation) as well as sever filaments already formed. Plays a role in ciliogenesis. This Equus caballus (Horse) protein is Gelsolin (GSN).